The chain runs to 425 residues: Glutamyl-tRNA reductase (425 aa).

Substrate-binding positions include 49–52, Ser107, 112–114, and Gln118; these read TCNR and EPQ. Cys50 acts as the Nucleophile in catalysis. 187-192 provides a ligand contact to NADP(+); it reads GAGETI.

This sequence belongs to the glutamyl-tRNA reductase family. Homodimer.

It catalyses the reaction (S)-4-amino-5-oxopentanoate + tRNA(Glu) + NADP(+) = L-glutamyl-tRNA(Glu) + NADPH + H(+). It participates in porphyrin-containing compound metabolism; protoporphyrin-IX biosynthesis; 5-aminolevulinate from L-glutamyl-tRNA(Glu): step 1/2. In terms of biological role, catalyzes the NADPH-dependent reduction of glutamyl-tRNA(Glu) to glutamate 1-semialdehyde (GSA). The chain is Glutamyl-tRNA reductase from Pseudomonas putida (strain ATCC 47054 / DSM 6125 / CFBP 8728 / NCIMB 11950 / KT2440).